A 45-amino-acid chain; its full sequence is AGTAXGDLTPFQLESLREVCEVNLACEHMADTXGIVAAYTAYYGY.

One can recognise a Gla domain in the interval 1–44 (AGTAXGDLTPFQLESLREVCEVNLACEHMADTXGIVAAYTAYYG). Residues Glu14, Glu18, Glu21, and Glu27 each contribute to the Ca(2+) site. 4-carboxyglutamate is present on residues Glu14, Glu18, and Glu21. The cysteines at positions 20 and 26 are disulfide-linked.

This sequence belongs to the osteocalcin/matrix Gla protein family. In terms of processing, gamma-carboxyglutamate residues are formed by vitamin K dependent carboxylation by GGCX. These residues are essential for the binding of calcium.

It localises to the secreted. Functionally, the carboxylated form is one of the main organic components of the bone matrix, which constitutes 1-2% of the total bone protein. The carboxylated form binds strongly to apatite and calcium. The sequence is that of Osteocalcin (bglap) from Danio rerio (Zebrafish).